Reading from the N-terminus, the 182-residue chain is Adenylate kinase isoenzyme 6 homolog (182 aa).

The interval 1 to 20 (MATPETRRRPNILVTGSPGT) is disordered. ATP is bound by residues Gly19, Gly21, Lys22, Ser23, and Thr24. The interval 39-62 (EVSKEVRENNLQGDFDEQYNCHVL) is NMPbind. Residues 116-126 (SRGYSEFKIKE) form an LID region. Arg117 serves as a coordination point for ATP.

It belongs to the adenylate kinase family. AK6 subfamily. As to quaternary structure, monomer and homodimer. Interacts with small ribosomal subunit protein uS11. Not a structural component of 43S pre-ribosomes, but transiently interacts with them by binding to uS11.

The protein localises to the cytoplasm. The protein resides in the nucleus. The enzyme catalyses AMP + ATP = 2 ADP. It carries out the reaction ATP + H2O = ADP + phosphate + H(+). Functionally, broad-specificity nucleoside monophosphate (NMP) kinase that catalyzes the reversible transfer of the terminal phosphate group between nucleoside triphosphates and monophosphates. Also has ATPase activity. Involved in the late cytoplasmic maturation steps of the 40S ribosomal particles, specifically 18S rRNA maturation. While NMP activity is not required for ribosome maturation, ATPase activity is. Associates transiently with small ribosomal subunit protein uS11. ATP hydrolysis breaks the interaction with uS11. May temporarily remove uS11 from the ribosome to enable a conformational change of the ribosomal RNA that is needed for the final maturation step of the small ribosomal subunit. Its NMP activity may have a role in nuclear energy homeostasis. AMP and dAMP are the preferred substrates, but CMP and TMP are also good substrates. ATP and dATP are the best phosphate donors. This is Adenylate kinase isoenzyme 6 homolog from Caenorhabditis elegans.